A 116-amino-acid polypeptide reads, in one-letter code: MRHQLRVPQLGRPADQRKALLRGLTTQLIREGRVTTTKTRAKALRDEVERMIGLAKDGSLAARRRAIGYIYDKKLVHSLFEKAQERYGDRQGGYTRIVRTVPRRGDNAEMAIIELV.

This sequence belongs to the bacterial ribosomal protein bL17 family. As to quaternary structure, part of the 50S ribosomal subunit. Contacts protein L32.

This chain is Large ribosomal subunit protein bL17, found in Prochlorococcus marinus (strain SARG / CCMP1375 / SS120).